A 396-amino-acid chain; its full sequence is Flap endonuclease 1 (396 aa).

An N-domain region spans residues 1-104 (MGIKHLYQLI…GELAKRFQRK (104 aa)). Aspartate 34 contacts Mg(2+). Residues arginine 47 and arginine 70 each coordinate DNA. 5 residues coordinate Mg(2+): aspartate 86, glutamate 158, glutamate 160, aspartate 179, and aspartate 181. Residues 122 to 255 (DVEKFSRRTV…STALKLIRDH (134 aa)) are I-domain. Glutamate 158 provides a ligand contact to DNA. DNA-binding residues include glycine 233 and aspartate 235. Mg(2+) is bound at residue aspartate 235. The segment at 338–396 (MKSAQQSRLEGFFKPVERTPEEKASLKRKADEKLSEKKKKQKEEAKAKKQAKSKPRTAG) is disordered. Residues 342-350 (QQSRLEGFF) form an interaction with PCNA region. Residues 352-384 (PVERTPEEKASLKRKADEKLSEKKKKQKEEAKA) are compositionally biased toward basic and acidic residues. Over residues 385-396 (KKQAKSKPRTAG) the composition is skewed to basic residues.

The protein belongs to the XPG/RAD2 endonuclease family. FEN1 subfamily. Interacts with PCNA. Three molecules of FEN1 bind to one PCNA trimer with each molecule binding to one PCNA monomer. PCNA stimulates the nuclease activity without altering cleavage specificity. It depends on Mg(2+) as a cofactor. Post-translationally, phosphorylated. Phosphorylation upon DNA damage induces relocalization to the nuclear plasma.

It is found in the nucleus. It localises to the nucleolus. The protein localises to the nucleoplasm. Its subcellular location is the mitochondrion. Structure-specific nuclease with 5'-flap endonuclease and 5'-3' exonuclease activities involved in DNA replication and repair. During DNA replication, cleaves the 5'-overhanging flap structure that is generated by displacement synthesis when DNA polymerase encounters the 5'-end of a downstream Okazaki fragment. It enters the flap from the 5'-end and then tracks to cleave the flap base, leaving a nick for ligation. Also involved in the long patch base excision repair (LP-BER) pathway, by cleaving within the apurinic/apyrimidinic (AP) site-terminated flap. Acts as a genome stabilization factor that prevents flaps from equilibrating into structures that lead to duplications and deletions. Also possesses 5'-3' exonuclease activity on nicked or gapped double-stranded DNA, and exhibits RNase H activity. Also involved in replication and repair of rDNA and in repairing mitochondrial DNA. The polypeptide is Flap endonuclease 1 (Phaeosphaeria nodorum (strain SN15 / ATCC MYA-4574 / FGSC 10173) (Glume blotch fungus)).